We begin with the raw amino-acid sequence, 107 residues long: U-scoloptoxin(19)-Sm1a (107 aa).

The first 20 residues, 1–20 (MRFLVSVAFLLTVSSLLVSG), serve as a signal peptide directing secretion.

The protein belongs to the scoloptoxin-19 family. In terms of processing, contains 6 disulfide bonds. In terms of tissue distribution, expressed by the venom gland.

Its subcellular location is the secreted. This chain is U-scoloptoxin(19)-Sm1a, found in Scolopendra morsitans (Tanzanian blue ringleg centipede).